A 325-amino-acid chain; its full sequence is Thiamine-monophosphate kinase (325 aa).

Residues D27 and D44 each coordinate Mg(2+). Substrate is bound at residue H51. D73 is a binding site for Mg(2+). ATP-binding positions include Y103, 120 to 121, and R147; that span reads GD. Residue D121 participates in Mg(2+) binding. D215 is a Mg(2+) binding site. Residue S217 coordinates ATP. D218 provides a ligand contact to Mg(2+). E264 and Y321 together coordinate substrate.

It belongs to the thiamine-monophosphate kinase family.

It catalyses the reaction thiamine phosphate + ATP = thiamine diphosphate + ADP. It participates in cofactor biosynthesis; thiamine diphosphate biosynthesis; thiamine diphosphate from thiamine phosphate: step 1/1. In terms of biological role, catalyzes the ATP-dependent phosphorylation of thiamine-monophosphate (TMP) to form thiamine-pyrophosphate (TPP), the active form of vitamin B1. The polypeptide is Thiamine-monophosphate kinase (Bacillus subtilis (strain 168)).